Reading from the N-terminus, the 312-residue chain is Acetaldehyde dehydrogenase 4 (312 aa).

Position 12 to 15 (12 to 15 (SGNI)) interacts with NAD(+). Cysteine 132 serves as the catalytic Acyl-thioester intermediate. Residues 163 to 171 (SAGPGTRAN) and asparagine 290 contribute to the NAD(+) site.

Belongs to the acetaldehyde dehydrogenase family.

The catalysed reaction is acetaldehyde + NAD(+) + CoA = acetyl-CoA + NADH + H(+). The polypeptide is Acetaldehyde dehydrogenase 4 (Azotobacter vinelandii (strain DJ / ATCC BAA-1303)).